The following is a 503-amino-acid chain: Pre-glycoprotein polyprotein GP complex (503 aa).

Glycine 2 carries the N-myristoyl glycine; by host lipid modification. At 2 to 17 the chain is on the extracellular side; the sequence is GQIVTLIQSIPEVLQE. Residues 18–33 form a helical membrane-spanning segment; that stretch reads VFNVALIIVSVLCIVK. At 34-58 the chain is on the cytoplasmic side; the sequence is GFVNLMRCGLFQLVTFLILSGRSCD. Cysteine 57 lines the Zn(2+) pocket. The Extracellular portion of the chain corresponds to 59–446; it reads SMMIDRRHNL…QGKTPLALTD (388 aa). Disulfide bonds link cysteine 86–cysteine 248, cysteine 293–cysteine 306, cysteine 315–cysteine 324, and cysteine 378–cysteine 399. Residues asparagine 89, asparagine 111, asparagine 181, and asparagine 241 are each glycosylated (N-linked (GlcNAc...) asparagine; by host). N-linked (GlcNAc...) asparagine; by host glycans are attached at residues asparagine 379, asparagine 387, asparagine 404, and asparagine 409. A helical transmembrane segment spans residues 447–467; that stretch reads ICFWSLVFYTITVFLHIVGIP. The Cytoplasmic segment spans residues 468–503; the sequence is THRHIIGDGCPKPHRITRNSLCSCGYYKYQRNLTNG. Residues histidine 469, histidine 471, cysteine 477, histidine 481, cysteine 489, and cysteine 491 each coordinate Zn(2+).

The protein belongs to the arenaviridae GPC protein family. Interacts with glycoprotein G2. Part of the GP complex (GP-C) together with glycoprotein G1 and glycoprotein G2. The GP-complex interacts with protein Z, which interacts with ribonucleocapsid; these interactions may induce virion budding. In terms of assembly, homotrimer; disulfide-linked. In pre-fusion state, G1 homotrimers bind G2 homotrimers via ionic interactions. Part of the GP complex (GP-C) together with glycoprotein G2 and the stable signal peptide. The GP-complex interacts with protein Z, which interacts with ribonucleocapsid; these interactions may induce virion budding. As to quaternary structure, homotrimer. Interacts with the stable signal peptide. In pre-fusion state, G2 homotrimers bind G1 homotrimers via ionic interactions. Part of the GP complex (GP-C) together with glycoprotein G1 and the stable signal peptide. Acidification in the endosome triggers rearrangements, which ultimately leads to a 6 helix bundle formed by the two heptad repeat domains (HR1 and HR2) in post-fusion state. The GP-complex interacts with protein Z, which interacts with ribonucleocapsid; these interactions may induce virion budding. Specific enzymatic cleavages in vivo yield mature proteins. GP-C polyprotein is cleaved in the endoplasmic reticulum by the host protease MBTPS1. Only cleaved glycoprotein is incorporated into virions. In terms of processing, the SSP remains stably associated with the GP complex following cleavage by signal peptidase and plays crucial roles in the trafficking of GP through the secretory pathway. Post-translationally, myristoylation is necessary for GP2-mediated fusion activity.

The protein resides in the virion membrane. The protein localises to the host endoplasmic reticulum membrane. Its subcellular location is the host Golgi apparatus membrane. It is found in the host cell membrane. Its function is as follows. Functions as a cleaved signal peptide that is retained as the third component of the GP complex (GP-C). Helps to stabilize the spike complex in its native conformation. The SSP is required for efficient glycoprotein expression, post-translational maturation cleavage of G1 and G2, glycoprotein transport to the cell surface plasma membrane, formation of infectious virus particles, and acid pH-dependent glycoprotein-mediated cell fusion. Forms the virion spikes together with glycoprotein G2. The glycoprotein spike trimers are connected to the underlying matrix. Interacts with the host receptor leading to virus endocytosis. Functionally, forms the virion spikes together with glycoprotein G1. The glycoprotein spike trimers are connected to the underlying matrix. Class I viral fusion protein that directs fusion of viral and host endosomal membranes, leading to delivery of the nucleocapsid into the cytoplasm. Membrane fusion is mediated by irreversible conformational changes induced by acidification. In Cavia cutleri (Guinea pig), this protein is Pre-glycoprotein polyprotein GP complex.